The chain runs to 198 residues: MNFLAHLHLATLADSSLLGNLMADFVRGNPEGQYSADVVAGIRMHRRVDVLTDTHPLVIQARHLFSNSYRRVAPITLDIIWDHFLSLNWDKLVPTYSLPAFIHHARSQIEPHLYYTPEKFQELNAFLWRQNWLIRYADLAFIADVLKGMARRHPRLSALSGSFQDIEQHYADFDALFWQFYPYMMEKAENKDFYCLPQ.

This sequence belongs to the AcpH family.

The enzyme catalyses holo-[ACP] + H2O = apo-[ACP] + (R)-4'-phosphopantetheine + H(+). In terms of biological role, converts holo-ACP to apo-ACP by hydrolytic cleavage of the phosphopantetheine prosthetic group from ACP. This is Acyl carrier protein phosphodiesterase from Photorhabdus laumondii subsp. laumondii (strain DSM 15139 / CIP 105565 / TT01) (Photorhabdus luminescens subsp. laumondii).